We begin with the raw amino-acid sequence, 384 residues long: 8-amino-7-oxononanoate synthase (384 aa).

Arginine 21 contacts substrate. 108-109 (GF) lines the pyridoxal 5'-phosphate pocket. Substrate is bound at residue histidine 133. Pyridoxal 5'-phosphate contacts are provided by serine 179, histidine 207, and threonine 233. The residue at position 236 (lysine 236) is an N6-(pyridoxal phosphate)lysine. Threonine 352 is a substrate binding site.

Belongs to the class-II pyridoxal-phosphate-dependent aminotransferase family. BioF subfamily. Homodimer. The cofactor is pyridoxal 5'-phosphate.

The catalysed reaction is 6-carboxyhexanoyl-[ACP] + L-alanine + H(+) = (8S)-8-amino-7-oxononanoate + holo-[ACP] + CO2. It functions in the pathway cofactor biosynthesis; biotin biosynthesis. Functionally, catalyzes the decarboxylative condensation of pimeloyl-[acyl-carrier protein] and L-alanine to produce 8-amino-7-oxononanoate (AON), [acyl-carrier protein], and carbon dioxide. In Citrobacter koseri (strain ATCC BAA-895 / CDC 4225-83 / SGSC4696), this protein is 8-amino-7-oxononanoate synthase.